Reading from the N-terminus, the 408-residue chain is Dicamba O-demethylase 1, ferredoxin reductase component (408 aa).

FAD-binding residues include Gly14, Lys49, Val82, Arg130, Asp279, and Val298.

It belongs to the FAD-dependent oxidoreductase family. Monomer. The dicamba O-demethylase multicomponent enzyme system is composed of an oxygenase component (DdmC) and an electron transfer component formed by a ferredoxin reductase (DdmA1) and a ferredoxin (DdmB). In vitro, dicamba O-demethylase assays in which DdmA2 is substituted for DdmA1 demonstrate that the two enzymes possess nearly identical activities. It depends on FAD as a cofactor.

The enzyme catalyses 2 reduced [2Fe-2S]-[ferredoxin] + NAD(+) + H(+) = 2 oxidized [2Fe-2S]-[ferredoxin] + NADH. Its function is as follows. Component of the dicamba O-demethylase multicomponent enzyme system involved in the degradation of the herbicide dicamba. In vitro, catalyzes the transfers of electrons from ferredoxin (DdmB) to NADH. Both NADH and NADPH support enzyme activity, with NADH being markedly more effective than NADPH. The polypeptide is Dicamba O-demethylase 1, ferredoxin reductase component (Stenotrophomonas maltophilia (Pseudomonas maltophilia)).